Reading from the N-terminus, the 398-residue chain is S-adenosylmethionine synthase (398 aa).

Residue histidine 16 participates in ATP binding. Residue aspartate 18 participates in Mg(2+) binding. A K(+)-binding site is contributed by glutamate 44. Residues glutamate 57 and glutamine 100 each coordinate L-methionine. A flexible loop region spans residues glutamine 100–glutamate 110. ATP contacts are provided by residues aspartate 175–lysine 177, arginine 242–phenylalanine 243, aspartate 251, arginine 257–lysine 258, alanine 274, and lysine 278. Residue aspartate 251 coordinates L-methionine. Position 282 (lysine 282) interacts with L-methionine.

It belongs to the AdoMet synthase family. In terms of assembly, homotetramer; dimer of dimers. Requires Mg(2+) as cofactor. K(+) serves as cofactor.

The protein localises to the cytoplasm. The catalysed reaction is L-methionine + ATP + H2O = S-adenosyl-L-methionine + phosphate + diphosphate. The protein operates within amino-acid biosynthesis; S-adenosyl-L-methionine biosynthesis; S-adenosyl-L-methionine from L-methionine: step 1/1. Functionally, catalyzes the formation of S-adenosylmethionine (AdoMet) from methionine and ATP. The overall synthetic reaction is composed of two sequential steps, AdoMet formation and the subsequent tripolyphosphate hydrolysis which occurs prior to release of AdoMet from the enzyme. In Streptococcus agalactiae serotype Ia (strain ATCC 27591 / A909 / CDC SS700), this protein is S-adenosylmethionine synthase.